Consider the following 377-residue polypeptide: 23S rRNA (uracil(747)-C(5))-methyltransferase RlmC (377 aa).

Positions 3, 11, 14, and 87 each coordinate [4Fe-4S] cluster. S-adenosyl-L-methionine is bound by residues glutamine 212, phenylalanine 241, glutamate 262, and asparagine 307. The active-site Nucleophile is cysteine 334.

The protein belongs to the class I-like SAM-binding methyltransferase superfamily. RNA M5U methyltransferase family. RlmC subfamily.

The catalysed reaction is uridine(747) in 23S rRNA + S-adenosyl-L-methionine = 5-methyluridine(747) in 23S rRNA + S-adenosyl-L-homocysteine + H(+). In terms of biological role, catalyzes the formation of 5-methyl-uridine at position 747 (m5U747) in 23S rRNA. The sequence is that of 23S rRNA (uracil(747)-C(5))-methyltransferase RlmC from Photorhabdus laumondii subsp. laumondii (strain DSM 15139 / CIP 105565 / TT01) (Photorhabdus luminescens subsp. laumondii).